The primary structure comprises 314 residues: Serine/threonine-protein phosphatase CPPED1 (314 aa).

A Phosphoserine modification is found at Ser2. The catalytic stretch occupies residues 47–250 (KAWSTGDCDN…KVVFSGHYHR (204 aa)). A divalent metal cation is bound by residues Asp53, Asp90, Asn127, and His247. Ser294 carries the phosphoserine modification.

The protein belongs to the metallophosphoesterase superfamily. CPPED1 family. The cofactor is a divalent metal cation.

It localises to the cytoplasm. It catalyses the reaction O-phospho-L-seryl-[protein] + H2O = L-seryl-[protein] + phosphate. The catalysed reaction is O-phospho-L-threonyl-[protein] + H2O = L-threonyl-[protein] + phosphate. In terms of biological role, protein phosphatase that dephosphorylates AKT family kinase specifically at 'Ser-473', blocking cell cycle progression and promoting cell apoptosis. May play an inhibitory role in glucose uptake by adipocytes. This Pongo abelii (Sumatran orangutan) protein is Serine/threonine-protein phosphatase CPPED1 (CPPED1).